The primary structure comprises 338 residues: Fructose-1,6-bisphosphatase class 1 1 (338 aa).

Residues glutamate 91, aspartate 113, leucine 115, and aspartate 116 each contribute to the Mg(2+) site. Substrate is bound by residues 116 to 119, asparagine 208, and lysine 274; that span reads DGSS. Residue glutamate 280 participates in Mg(2+) binding.

Belongs to the FBPase class 1 family. As to quaternary structure, homotetramer. The cofactor is Mg(2+).

The protein resides in the cytoplasm. It carries out the reaction beta-D-fructose 1,6-bisphosphate + H2O = beta-D-fructose 6-phosphate + phosphate. It functions in the pathway carbohydrate biosynthesis; gluconeogenesis. The sequence is that of Fructose-1,6-bisphosphatase class 1 1 from Cupriavidus taiwanensis (strain DSM 17343 / BCRC 17206 / CCUG 44338 / CIP 107171 / LMG 19424 / R1) (Ralstonia taiwanensis (strain LMG 19424)).